Consider the following 782-residue polypeptide: Homeotic protein proboscipedia (782 aa).

6 disordered regions span residues 1-23 (MQEV…ESPL), 153-195 (PQTP…VPEN), 251-336 (MKHK…GISS), 358-380 (SSVS…KDDG), 439-493 (IATP…QQQP), and 547-586 (YYNY…ADFE). The Antp-type hexapeptide motif lies at 164 to 169 (EYPWMK). A DNA-binding region (homeobox) is located at residues 198-257 (PRRLRTAYTNTQLLELEKEFHFNKYLCRPRRIEIAASLDLTERQVKVWFQNRRMKHKRQT). Residues 308–321 (NNNTPSATNNNPSA) show a composition bias toward low complexity. Residues 322 to 336 (GNLTPNSSLETGISS) show a composition bias toward polar residues. Residues 452–463 (NGSGGGPAGGYF) are compositionally biased toward gly residues. The span at 464 to 493 (PGYYPSPKQQQQVQQQQLHPQQQQLPQQQP) shows a compositional bias: low complexity. Residues 563 to 580 (QQHHHHAQHHQQQQHHQN) are compositionally biased toward basic residues.

This sequence belongs to the Antp homeobox family. Proboscipedia subfamily.

Its subcellular location is the nucleus. Sequence-specific transcription factor which is part of a developmental regulatory system that provides cells with specific positional identities on the anterior-posterior axis. Controls development of mouthparts, and labial and maxillary palps. The chain is Homeotic protein proboscipedia (pb) from Drosophila melanogaster (Fruit fly).